Reading from the N-terminus, the 427-residue chain is Glycophorin-binding protein-related antigen (427 aa).

GBP repeat units lie at residues leucine 109–glutamate 149, threonine 150–glutamate 189, serine 190–glutamate 229, threonine 230–threonine 269, serine 270–glutamate 307, threonine 308–glutamate 347, threonine 348–glutamate 387, and threonine 388–serine 427.

The chain is Glycophorin-binding protein-related antigen (GBPH) from Plasmodium falciparum (isolate FCBR / Columbia).